A 222-amino-acid polypeptide reads, in one-letter code: Iron-sulfur cluster repair protein YtfE (222 aa).

It belongs to the RIC family. YtfE subfamily. Homodimer.

It localises to the cytoplasm. Functionally, di-iron-containing protein involved in the repair of iron-sulfur clusters damaged by oxidative and nitrosative stress conditions. In Musicola paradisiaca (strain Ech703) (Dickeya paradisiaca), this protein is Iron-sulfur cluster repair protein YtfE.